The sequence spans 2183 residues: Genome polyprotein (2183 aa).

G2 carries N-myristoyl glycine; by host lipidation. Residues 2–1493 lie on the Cytoplasmic side of the membrane; it reads GAQVSTQKTG…HVSRAFICLQ (1492 aa). An amphipathic alpha-helix region spans residues 566–582; that stretch reads FYQGPTEESVERAMGRV. Active-site for protease 2A activity residues include H870 and D888. Zn(2+)-binding residues include C905 and C907. The active-site For protease 2A activity is the C959. Zn(2+)-binding residues include C965 and H967. The interval 1099-1171 is membrane-binding; it reads NNGWLKKFTE…EQSAPSQSDQ (73 aa). The tract at residues 1099-1237 is oligomerization; the sequence is NNGWLKKFTE…SPGAGKSVAT (139 aa). The RNA-binding stretch occupies residues 1120 to 1124; the sequence is AVKIQ. The 157-residue stretch at 1203–1359 folds into the SF3 helicase domain; the sequence is EKKMSNYIQF…SMYSQNGKIN (157 aa). Zn(2+) contacts are provided by C1367, C1379, and C1384. The segment at 1367 to 1384 adopts a C4-type; degenerate zinc-finger fold; it reads CDEECCPVNFKRCCPLVC. The tract at residues 1411–1418 is RNA-binding; it reads EYNHRHSV. An oligomerization region spans residues 1422-1427; that stretch reads LEALFQ. The stretch at 1494 to 1509 is an intramembrane region; that stretch reads ALTTFVSVAGIIYIIY. Over 1510–2183 the chain is Cytoplasmic; it reads KLFAGFQGAY…TLRRKWLDSF (674 aa). Y1519 is subject to O-(5'-phospho-RNA)-tyrosine. The Peptidase C3 domain occupies 1539 to 1717; that stretch reads GPAFEFAVAM…FSAGLLKHYF (179 aa). Residues H1578, E1609, and C1685 each act as for protease 3C activity in the active site. Residues 1948–2064 enclose the RdRp catalytic domain; the sequence is GHLIAFDYSG…SYPWPIDASL (117 aa). 2 residues coordinate Mg(2+): D1954 and D2050.

It belongs to the picornaviruses polyprotein family. In terms of assembly, interacts with capsid protein VP1 and capsid protein VP3 to form heterotrimeric protomers. Interacts with capsid protein VP0, and capsid protein VP3 to form heterotrimeric protomers. Five protomers subsequently associate to form pentamers which serve as building blocks for the capsid. Interacts with capsid protein VP2, capsid protein VP3 and capsid protein VP4 following cleavage of capsid protein VP0. Interacts with host CXADR. As to quaternary structure, interacts with capsid protein VP1 and capsid protein VP3 in the mature capsid. In terms of assembly, interacts with capsid protein VP0 and capsid protein VP1 to form heterotrimeric protomers. Five protomers subsequently associate to form pentamers which serve as building blocks for the capsid. Interacts with capsid protein VP4 in the mature capsid. Interacts with protein 2C; this interaction may be important for virion morphogenesis. Interacts with capsid protein VP1 and capsid protein VP3. As to quaternary structure, homodimer. In terms of assembly, homohexamer; forms a hexameric ring structure with 6-fold symmetry characteristic of AAA+ ATPases. Interacts (via N-terminus) with host RTN3 (via reticulon domain); this interaction is important for viral replication. Interacts with capsid protein VP3; this interaction may be important for virion morphogenesis. Interacts with protein 3CD. As to quaternary structure, homodimer. Interacts with host GBF1. Interacts (via GOLD domain) with host ACBD3 (via GOLD domain); this interaction allows the formation of a viral protein 3A/ACBD3 heterotetramer with a 2:2 stoichiometry, which will stimulate the recruitment of host PI4KB in order to synthesize PI4P at the viral RNA replication sites. In terms of assembly, interacts with RNA-directed RNA polymerase. Interacts with protein 3AB and with RNA-directed RNA polymerase. As to quaternary structure, interacts with Viral protein genome-linked and with protein 3CD. Mg(2+) serves as cofactor. Specific enzymatic cleavages in vivo by the viral proteases yield processing intermediates and the mature proteins. In terms of processing, myristoylation is required for the formation of pentamers during virus assembly. Further assembly of 12 pentamers and a molecule of genomic RNA generates the provirion. Post-translationally, during virion maturation, immature virions are rendered infectious following cleavage of VP0 into VP4 and VP2. This maturation seems to be an autocatalytic event triggered by the presence of RNA in the capsid and it is followed by a conformational change infectious virion. Myristoylation is required during RNA encapsidation and formation of the mature virus particle. In terms of processing, VPg is uridylylated by the polymerase into VPg-pUpU. This acts as a nucleotide-peptide primer for the genomic RNA replication.

It localises to the virion. The protein resides in the host cytoplasm. The protein localises to the host cytoplasmic vesicle membrane. It is found in the host nucleus. The enzyme catalyses a ribonucleoside 5'-triphosphate + H2O = a ribonucleoside 5'-diphosphate + phosphate + H(+). The catalysed reaction is Selective cleavage of Tyr-|-Gly bond in the picornavirus polyprotein.. It carries out the reaction RNA(n) + a ribonucleoside 5'-triphosphate = RNA(n+1) + diphosphate. It catalyses the reaction Selective cleavage of Gln-|-Gly bond in the poliovirus polyprotein. In other picornavirus reactions Glu may be substituted for Gln, and Ser or Thr for Gly.. With respect to regulation, replication or transcription is subject to high level of random mutations by the nucleotide analog ribavirin. In terms of biological role, forms an icosahedral capsid of pseudo T=3 symmetry with capsid proteins VP2 and VP3. The capsid is 300 Angstroms in diameter, composed of 60 copies of each capsid protein and enclosing the viral positive strand RNA genome. Capsid protein VP1 mainly forms the vertices of the capsid. Capsid protein VP1 interacts with host CXADR to provide virion attachment to target host cells. This attachment induces virion internalization. Tyrosine kinases are probably involved in the entry process. After binding to its receptor, the capsid undergoes conformational changes. Capsid protein VP1 N-terminus (that contains an amphipathic alpha-helix) and capsid protein VP4 are externalized. Together, they shape a pore in the host membrane through which viral genome is translocated to host cell cytoplasm. Functionally, forms an icosahedral capsid of pseudo T=3 symmetry with capsid proteins VP2 and VP3. The capsid is 300 Angstroms in diameter, composed of 60 copies of each capsid protein and enclosing the viral positive strand RNA genome. Its function is as follows. Lies on the inner surface of the capsid shell. After binding to the host receptor, the capsid undergoes conformational changes. Capsid protein VP4 is released, Capsid protein VP1 N-terminus is externalized, and together, they shape a pore in the host membrane through which the viral genome is translocated into the host cell cytoplasm. Component of immature procapsids, which is cleaved into capsid proteins VP4 and VP2 after maturation. Allows the capsid to remain inactive before the maturation step. In terms of biological role, cysteine protease that cleaves viral polyprotein and specific host proteins. It is responsible for the autocatalytic cleavage between the P1 and P2 regions, which is the first cleavage occurring in the polyprotein. Also cleaves the host translation initiation factor EIF4G1, in order to shut down the capped cellular mRNA translation. Inhibits the host nucleus-cytoplasm protein and RNA trafficking by cleaving host members of the nuclear pores. Counteracts stress granule formation probably by antagonizing its assembly or promoting its dissassembly. Cleaves and inhibits host IFIH1/MDA5, thereby inhibiting the type-I IFN production and the establishment of the antiviral state. Cleaves and inhibits host MAVS, thereby inhibiting the type-I IFN production and the establishment of the antiviral state. Functionally, plays an essential role in the virus replication cycle by acting as a viroporin. Creates a pore in the host endoplasmic reticulum and as a consequence releases Ca2+ in the cytoplasm of infected cell. In turn, high levels of cytoplasmic calcium may trigger membrane trafficking and transport of viral ER-associated proteins to viroplasms, sites of viral genome replication. Its function is as follows. Induces and associates with structural rearrangements of intracellular membranes. Displays RNA-binding, nucleotide binding and NTPase activities. May play a role in virion morphogenesis and viral RNA encapsidation by interacting with the capsid protein VP3. Localizes the viral replication complex to the surface of membranous vesicles. Together with protein 3CD binds the Cis-Active RNA Element (CRE) which is involved in RNA synthesis initiation. Acts as a cofactor to stimulate the activity of 3D polymerase, maybe through a nucleid acid chaperone activity. In terms of biological role, localizes the viral replication complex to the surface of membranous vesicles. It inhibits host cell endoplasmic reticulum-to-Golgi apparatus transport and causes the disassembly of the Golgi complex, possibly through GBF1 interaction. This would result in depletion of MHC, trail receptors and IFN receptors at the host cell surface. Plays an essential role in viral RNA replication by recruiting ACBD3 and PI4KB at the viral replication sites, thereby allowing the formation of the rearranged membranous structures where viral replication takes place. Functionally, acts as a primer for viral RNA replication and remains covalently bound to viral genomic RNA. VPg is uridylylated prior to priming replication into VPg-pUpU. The oriI viral genomic sequence may act as a template for this. The VPg-pUpU is then used as primer on the genomic RNA poly(A) by the RNA-dependent RNA polymerase to replicate the viral genome. During genome replication, the VPg-RNA linkage is removed by the host TDP2, thereby accelerating replication. During the late stage of the replication cycle, host TDP2 is excluded from sites of viral RNA synthesis and encapsidation, allowing for the generation of progeny virions. Its function is as follows. Involved in the viral replication complex and viral polypeptide maturation. It exhibits protease activity with a specificity and catalytic efficiency that is different from protease 3C. Protein 3CD lacks polymerase activity. Protein 3CD binds to the 5'UTR of the viral genome. Replicates the viral genomic RNA on the surface of intracellular membranes. May form linear arrays of subunits that propagate along a strong head-to-tail interaction called interface-I. Covalently attaches UMP to a tyrosine of VPg, which is used to prime RNA synthesis. The positive stranded RNA genome is first replicated at virus induced membranous vesicles, creating a dsRNA genomic replication form. This dsRNA is then used as template to synthesize positive stranded RNA genomes. ss(+)RNA genomes are either translated, replicated or encapsidated. In terms of biological role, major viral protease that mediates proteolytic processing of the polyprotein. Cleaves host EIF5B, contributing to host translation shutoff. Also cleaves host PABPC1, contributing to host translation shutoff. Cleaves host NLRP1, triggers host N-glycine-mediated degradation of the autoinhibitory NLRP1 N-terminal fragment. The polypeptide is Genome polyprotein (Coxsackievirus B4 (strain JVB / Benschoten / New York/51)).